The sequence spans 449 residues: Serum response factor homolog (449 aa).

The interval 23 to 166 (LADPADMYGN…PPANGKKTKG (144 aa)) is disordered. Positions 69-80 (QCQTLHSPQHAS) are enriched in polar residues. Residues 81 to 107 (QQQQQQQQQQQQHQQQQQQQQQHPQQQ) are compositionally biased toward low complexity. The residue at position 156 (serine 156) is a Phosphoserine. Residues 167-225 (RVKIKMEYIDNKLRRYTTFSKRKTGIMKKAYELSTLTGTQVMLLVASETGHVYTFATRK) form the MADS-box domain. Disordered stretches follow at residues 270-360 (YNIA…GGGS) and 418-449 (LTAS…QEFD). Composition is skewed to low complexity over residues 317–331 (SAPP…TASS) and 345–354 (TNSGPSTSTA).

In terms of tissue distribution, after germ band retraction, high levels of zygotic expression are observed in a distinct subset of peripheral tracheal cells distributed throughout the embryo and low levels in somatic muscle. Expressed in the future intervein tissue of the wing imaginal disk from the third instar larvae until eclosion of the adult fly (at protein level).

The protein localises to the nucleus. Its function is as follows. Required for the formation of intervein tissue of the wing. Acts in a dosage-dependent manner to suppress wing vein formation and promote development of intervein cells. Might play a role in the proper formation and maintenance of the trachea. The polypeptide is Serum response factor homolog (bs) (Drosophila melanogaster (Fruit fly)).